A 229-amino-acid chain; its full sequence is Acidic leucine-rich nuclear phosphoprotein 32-related protein 1 (229 aa).

4 LRR repeats span residues 19 to 40 (TVDTLFLDNAEDGQIGGLTDQL), 42 to 63 (NLEMLSMVKCGLTTLAGFPTLP), 64 to 85 (ALTYLDISDNQLGDNASFDVLV), and 90 to 110 (DLKKITLASNKLSLDNLRCLK). The LRRCT domain occupies 124-164 (PSLGLLEDYREKMFEMIPSLKILDGCDVDGEEVEEEFAGEG). A compositionally biased stretch (acidic residues) spans 155–177 (EVEEEFAGEGGEDSEEGSGDEDG). The tract at residues 155–229 (EVEEEFAGEG…DNKKAAGDDE (75 aa)) is disordered. Basic and acidic residues predominate over residues 219–229 (PDNKKAAGDDE).

Belongs to the ANP32 family.

The chain is Acidic leucine-rich nuclear phosphoprotein 32-related protein 1 from Caenorhabditis elegans.